The sequence spans 917 residues: Protein translocase subunit SecA (917 aa).

ATP contacts are provided by residues glutamine 87, 105–109, and aspartate 516; that span reads GEGKT. Zn(2+)-binding residues include cysteine 901, cysteine 903, cysteine 912, and histidine 913.

This sequence belongs to the SecA family. In terms of assembly, monomer and homodimer. Part of the essential Sec protein translocation apparatus which comprises SecA, SecYEG and auxiliary proteins SecDF-YajC and YidC. Zn(2+) serves as cofactor.

It localises to the cell inner membrane. The protein resides in the cytoplasm. The enzyme catalyses ATP + H2O + cellular proteinSide 1 = ADP + phosphate + cellular proteinSide 2.. Functionally, part of the Sec protein translocase complex. Interacts with the SecYEG preprotein conducting channel. Has a central role in coupling the hydrolysis of ATP to the transfer of proteins into and across the cell membrane, serving both as a receptor for the preprotein-SecB complex and as an ATP-driven molecular motor driving the stepwise translocation of polypeptide chains across the membrane. The sequence is that of Protein translocase subunit SecA from Acidovorax ebreus (strain TPSY) (Diaphorobacter sp. (strain TPSY)).